The chain runs to 226 residues: Sugar transporter SWEET1 (226 aa).

A run of 7 helical transmembrane segments spans residues 8 to 28, 42 to 62, 67 to 87, 94 to 114, 127 to 147, 161 to 181, and 185 to 205; these read LLST…AMIC, GVPF…GVLT, IVLV…IYYV, AFVR…VVYT, ITGI…LATL, LPLI…GILI, and FIQI…SLFV. Residues 8–92 form the MtN3/slv 1 domain; the sequence is LLSTTAVIST…LIYYVFTVNK (85 aa). Residues 129–210 form the MtN3/slv 2 domain; that stretch reads GIFCCIVTVC…LSLFVVYPPR (82 aa).

It belongs to the SWEET sugar transporter family.

It is found in the golgi apparatus membrane. The protein resides in the cell membrane. Functionally, mediates both low-affinity uptake and efflux of sugar across the membrane. This Drosophila pseudoobscura pseudoobscura (Fruit fly) protein is Sugar transporter SWEET1 (slv).